The sequence spans 551 residues: Cation/acetate symporter ActP (551 aa).

The next 14 membrane-spanning stretches (helical) occupy residues 5–25, 34–54, 77–97, 104–124, 150–170, 184–204, 207–227, 263–283, 304–324, 356–376, 406–426, 430–450, 469–489, and 498–518; these read HWSALSLFVLPALAQAEALTG, IQAIVMFLLFVGGTLYITYWA, GLAIAGDYMSAASFLGISALV, GLIYSIGFLIGWPIILFLIAE, LSACGSLVVVALYLIAQMVGA, VAVVLVGILMVLYVLFGGMLA, WVQIIKAVMLLSGATFMAIMV, ISALSLGLALMFGTAGLPHIL, GFIGYFYILTFIIGFGAILLV, FFLGFISAVAFATILAVVAGL, VSKITVIILGIVAIGLGILFE, IAFMVGLAFSIAASCNFPIII, LGLSTAVILMILGPTIWVTIL, and YEYPALFSMIAAFVGTWFFSI.

This sequence belongs to the sodium:solute symporter (SSF) (TC 2.A.21) family.

It localises to the cell inner membrane. In terms of biological role, transports acetate. The protein is Cation/acetate symporter ActP of Yersinia pestis bv. Antiqua (strain Antiqua).